Consider the following 159-residue polypeptide: Phosphopantetheine adenylyltransferase (159 aa).

Ser-9 contributes to the substrate binding site. Residues 9 to 10 (SF) and His-17 contribute to the ATP site. Positions 41, 73, and 87 each coordinate substrate. ATP contacts are provided by residues 88–90 (GLR), Glu-98, and 123–129 (YSYLSSS).

The protein belongs to the bacterial CoaD family. In terms of assembly, homohexamer. Mg(2+) serves as cofactor.

The protein localises to the cytoplasm. It carries out the reaction (R)-4'-phosphopantetheine + ATP + H(+) = 3'-dephospho-CoA + diphosphate. The protein operates within cofactor biosynthesis; coenzyme A biosynthesis; CoA from (R)-pantothenate: step 4/5. In terms of biological role, reversibly transfers an adenylyl group from ATP to 4'-phosphopantetheine, yielding dephospho-CoA (dPCoA) and pyrophosphate. The polypeptide is Phosphopantetheine adenylyltransferase (Clostridium botulinum (strain Eklund 17B / Type B)).